Consider the following 185-residue polypeptide: Ribose 1,5-bisphosphate phosphokinase PhnN (185 aa).

13 to 20 (GPSGAGKD) lines the ATP pocket.

It belongs to the ribose 1,5-bisphosphokinase family.

It catalyses the reaction alpha-D-ribose 1,5-bisphosphate + ATP = 5-phospho-alpha-D-ribose 1-diphosphate + ADP. It participates in metabolic intermediate biosynthesis; 5-phospho-alpha-D-ribose 1-diphosphate biosynthesis; 5-phospho-alpha-D-ribose 1-diphosphate from D-ribose 5-phosphate (route II): step 3/3. Its function is as follows. Catalyzes the phosphorylation of ribose 1,5-bisphosphate to 5-phospho-D-ribosyl alpha-1-diphosphate (PRPP). This is Ribose 1,5-bisphosphate phosphokinase PhnN from Chromobacterium violaceum (strain ATCC 12472 / DSM 30191 / JCM 1249 / CCUG 213 / NBRC 12614 / NCIMB 9131 / NCTC 9757 / MK).